The primary structure comprises 486 residues: Cardiolipin synthase A (486 aa).

Helical transmembrane passes span 3 to 23 (TFYT…IAGV) and 38 to 58 (MAWL…YLSL). PLD phosphodiesterase domains follow at residues 219–246 (MDLR…VDPR) and 399–426 (EGGL…DMRS). Residues histidine 224, lysine 226, aspartate 231, histidine 404, lysine 406, and aspartate 411 contribute to the active site.

It belongs to the phospholipase D family. Cardiolipin synthase subfamily. ClsA sub-subfamily.

It localises to the cell inner membrane. It carries out the reaction 2 a 1,2-diacyl-sn-glycero-3-phospho-(1'-sn-glycerol) = a cardiolipin + glycerol. Catalyzes the reversible phosphatidyl group transfer from one phosphatidylglycerol molecule to another to form cardiolipin (CL) (diphosphatidylglycerol) and glycerol. The polypeptide is Cardiolipin synthase A (Erwinia tasmaniensis (strain DSM 17950 / CFBP 7177 / CIP 109463 / NCPPB 4357 / Et1/99)).